A 363-amino-acid chain; its full sequence is Putative agmatine deiminase (363 aa).

Over residues 1 to 10 the composition is skewed to polar residues; that stretch reads MTKQLSTSPK. The disordered stretch occupies residues 1–20; it reads MTKQLSTSPKQDGFRMPAEH. C355 serves as the catalytic Amidino-cysteine intermediate.

This sequence belongs to the agmatine deiminase family.

The catalysed reaction is agmatine + H2O = N-carbamoylputrescine + NH4(+). This Photobacterium profundum (strain SS9) protein is Putative agmatine deiminase.